Here is a 143-residue protein sequence, read N- to C-terminus: Large ribosomal subunit protein uL11 (143 aa).

This sequence belongs to the universal ribosomal protein uL11 family. As to quaternary structure, part of the ribosomal stalk of the 50S ribosomal subunit. Interacts with L10 and the large rRNA to form the base of the stalk. L10 forms an elongated spine to which L12 dimers bind in a sequential fashion forming a multimeric L10(L12)X complex. Post-translationally, one or more lysine residues are methylated.

Functionally, forms part of the ribosomal stalk which helps the ribosome interact with GTP-bound translation factors. The protein is Large ribosomal subunit protein uL11 of Bifidobacterium longum subsp. infantis (strain ATCC 15697 / DSM 20088 / JCM 1222 / NCTC 11817 / S12).